The following is a 127-amino-acid chain: UPF0102 protein Reut_A3265 (127 aa).

It belongs to the UPF0102 family.

This Cupriavidus pinatubonensis (strain JMP 134 / LMG 1197) (Cupriavidus necator (strain JMP 134)) protein is UPF0102 protein Reut_A3265.